Consider the following 488-residue polypeptide: Mannosylglycerate hydrolase MGH2 (488 aa).

Substrate contacts are provided by residues Tyr94, Trp98–Asp101, Tyr146, Gln167, and Gly227. The Proton donor role is filled by Asp229. Substrate-binding positions include Arg262 and Tyr415–Trp416. Glu459 functions as the Proton acceptor in the catalytic mechanism.

It belongs to the glycosyl hydrolase 63 family.

The enzyme catalyses (2R)-2-O-(alpha-D-mannosyl)-glycerate + H2O = D-mannose + (R)-glycerate. The catalysed reaction is (2R)-2-O-(alpha-D-glucopyranosyl)-glycerate + H2O = (R)-glycerate + D-glucose. Activity is not dependent on divalent cations, but it is enhanced by Mn(2+). Functionally, catalyzes the hydrolysis of alpha-D-mannosyl-glycerate (MG) to D-glycerate and D-mannose. Can also hydrolyze alpha-D-glucopyranosyl-glycerate (GG)with lower efficiency. This chain is Mannosylglycerate hydrolase MGH2, found in Selaginella moellendorffii (Spikemoss).